The chain runs to 353 residues: D-alanine--D-alanine ligase (353 aa).

An ATP-grasp domain is found at lysine 135 to glutamine 344. ATP is bound at residue glutamate 171–glutamate 226. Residues aspartate 297, glutamate 311, and asparagine 313 each contribute to the Mg(2+) site.

Belongs to the D-alanine--D-alanine ligase family. Requires Mg(2+) as cofactor. The cofactor is Mn(2+).

The protein resides in the cytoplasm. It carries out the reaction 2 D-alanine + ATP = D-alanyl-D-alanine + ADP + phosphate + H(+). Its pathway is cell wall biogenesis; peptidoglycan biosynthesis. Functionally, cell wall formation. In Picosynechococcus sp. (strain ATCC 27264 / PCC 7002 / PR-6) (Agmenellum quadruplicatum), this protein is D-alanine--D-alanine ligase.